The primary structure comprises 872 residues: Leucine--tRNA ligase (872 aa).

The 'HIGH' region signature appears at 42 to 52 (PYPSGSLHMGH). Positions 634–638 (TMSKS) match the 'KMSKS' region motif. ATP is bound at residue Lys637.

This sequence belongs to the class-I aminoacyl-tRNA synthetase family.

The protein localises to the cytoplasm. It carries out the reaction tRNA(Leu) + L-leucine + ATP = L-leucyl-tRNA(Leu) + AMP + diphosphate. This Nostoc sp. (strain PCC 7120 / SAG 25.82 / UTEX 2576) protein is Leucine--tRNA ligase.